Consider the following 341-residue polypeptide: L-threonine 3-dehydrogenase (341 aa).

Residue Cys-38 coordinates Zn(2+). Active-site charge relay system residues include Thr-40 and His-43. Residues His-63, Glu-64, Cys-93, Cys-96, Cys-99, and Cys-107 each coordinate Zn(2+). Residues Ile-175, Asp-195, Arg-200, Leu-262–Ile-264, and Ile-286–Tyr-287 each bind NAD(+).

This sequence belongs to the zinc-containing alcohol dehydrogenase family. Homotetramer. Zn(2+) is required as a cofactor.

The protein resides in the cytoplasm. It catalyses the reaction L-threonine + NAD(+) = (2S)-2-amino-3-oxobutanoate + NADH + H(+). It participates in amino-acid degradation; L-threonine degradation via oxydo-reductase pathway; glycine from L-threonine: step 1/2. Catalyzes the NAD(+)-dependent oxidation of L-threonine to 2-amino-3-ketobutyrate. The sequence is that of L-threonine 3-dehydrogenase from Escherichia coli (strain K12 / MC4100 / BW2952).